The following is a 219-amino-acid chain: 7-cyano-7-deazaguanine synthase (219 aa).

Leu-8–Leu-18 lines the ATP pocket. Zn(2+) is bound by residues Cys-185, Cys-193, Cys-196, and Cys-199.

Belongs to the QueC family. Zn(2+) serves as cofactor.

The enzyme catalyses 7-carboxy-7-deazaguanine + NH4(+) + ATP = 7-cyano-7-deazaguanine + ADP + phosphate + H2O + H(+). It participates in purine metabolism; 7-cyano-7-deazaguanine biosynthesis. Its function is as follows. Catalyzes the ATP-dependent conversion of 7-carboxy-7-deazaguanine (CDG) to 7-cyano-7-deazaguanine (preQ(0)). The polypeptide is 7-cyano-7-deazaguanine synthase (Desulfotalea psychrophila (strain LSv54 / DSM 12343)).